The primary structure comprises 312 residues: Lipoyl synthase (312 aa).

The span at 1–10 (MNEAPAEKQK) shows a compositional bias: basic and acidic residues. The tract at residues 1–20 (MNEAPAEKQKPQQGKRFSER) is disordered. [4Fe-4S] cluster-binding residues include Cys-51, Cys-56, Cys-62, Cys-77, Cys-81, Cys-84, and Ser-290. Residues 63 to 280 (WSRKTATYLA…RSVGESLGLF (218 aa)) enclose the Radical SAM core domain.

Belongs to the radical SAM superfamily. Lipoyl synthase family. [4Fe-4S] cluster serves as cofactor.

It is found in the cytoplasm. It catalyses the reaction [[Fe-S] cluster scaffold protein carrying a second [4Fe-4S](2+) cluster] + N(6)-octanoyl-L-lysyl-[protein] + 2 oxidized [2Fe-2S]-[ferredoxin] + 2 S-adenosyl-L-methionine + 4 H(+) = [[Fe-S] cluster scaffold protein] + N(6)-[(R)-dihydrolipoyl]-L-lysyl-[protein] + 4 Fe(3+) + 2 hydrogen sulfide + 2 5'-deoxyadenosine + 2 L-methionine + 2 reduced [2Fe-2S]-[ferredoxin]. It functions in the pathway protein modification; protein lipoylation via endogenous pathway; protein N(6)-(lipoyl)lysine from octanoyl-[acyl-carrier-protein]: step 2/2. Its function is as follows. Catalyzes the radical-mediated insertion of two sulfur atoms into the C-6 and C-8 positions of the octanoyl moiety bound to the lipoyl domains of lipoate-dependent enzymes, thereby converting the octanoylated domains into lipoylated derivatives. The sequence is that of Lipoyl synthase from Chlamydia felis (strain Fe/C-56) (Chlamydophila felis).